The chain runs to 23 residues: Malate dehydrogenase (23 aa).

Asn-7 is an NAD(+) binding site. A substrate-binding site is contributed by Arg-23.

It belongs to the LDH/MDH superfamily. MDH type 1 family. As to quaternary structure, homodimer.

The enzyme catalyses (S)-malate + NAD(+) = oxaloacetate + NADH + H(+). The protein is Malate dehydrogenase of Pseudotsuga menziesii (Douglas-fir).